The sequence spans 367 residues: Phosphoribosylaminoimidazole-succinocarboxamide synthase (367 aa).

Belongs to the SAICAR synthetase family.

The enzyme catalyses 5-amino-1-(5-phospho-D-ribosyl)imidazole-4-carboxylate + L-aspartate + ATP = (2S)-2-[5-amino-1-(5-phospho-beta-D-ribosyl)imidazole-4-carboxamido]succinate + ADP + phosphate + 2 H(+). It participates in purine metabolism; IMP biosynthesis via de novo pathway; 5-amino-1-(5-phospho-D-ribosyl)imidazole-4-carboxamide from 5-amino-1-(5-phospho-D-ribosyl)imidazole-4-carboxylate: step 1/2. This chain is Phosphoribosylaminoimidazole-succinocarboxamide synthase, found in Saccharophagus degradans (strain 2-40 / ATCC 43961 / DSM 17024).